The primary structure comprises 487 residues: Glutamyl-tRNA(Gln) amidotransferase subunit A (487 aa).

Residues Lys74 and Ser149 each act as charge relay system in the active site. Ser173 functions as the Acyl-ester intermediate in the catalytic mechanism.

It belongs to the amidase family. GatA subfamily. In terms of assembly, heterotrimer of A, B and C subunits.

It carries out the reaction L-glutamyl-tRNA(Gln) + L-glutamine + ATP + H2O = L-glutaminyl-tRNA(Gln) + L-glutamate + ADP + phosphate + H(+). In terms of biological role, allows the formation of correctly charged Gln-tRNA(Gln) through the transamidation of misacylated Glu-tRNA(Gln) in organisms which lack glutaminyl-tRNA synthetase. The reaction takes place in the presence of glutamine and ATP through an activated gamma-phospho-Glu-tRNA(Gln). The polypeptide is Glutamyl-tRNA(Gln) amidotransferase subunit A (Synechococcus sp. (strain WH7803)).